We begin with the raw amino-acid sequence, 123 residues long: Ribulose bisphosphate carboxylase small subunit, chloroplastic 1 (123 aa).

Methionine 1 is subject to Methionine derivative.

Belongs to the RuBisCO small chain family. As to quaternary structure, heterohexadecamer of 8 large and 8 small subunits.

The protein resides in the plastid. It is found in the chloroplast. Its function is as follows. RuBisCO catalyzes two reactions: the carboxylation of D-ribulose 1,5-bisphosphate, the primary event in carbon dioxide fixation, as well as the oxidative fragmentation of the pentose substrate. Both reactions occur simultaneously and in competition at the same active site. Although the small subunit is not catalytic it is essential for maximal activity. The sequence is that of Ribulose bisphosphate carboxylase small subunit, chloroplastic 1 from Spinacia oleracea (Spinach).